The chain runs to 584 residues: Arginine--tRNA ligase (584 aa).

The 'HIGH' region motif lies at 129 to 139; the sequence is ANPTGPLHVGH.

This sequence belongs to the class-I aminoacyl-tRNA synthetase family. In terms of assembly, monomer.

The protein resides in the cytoplasm. It carries out the reaction tRNA(Arg) + L-arginine + ATP = L-arginyl-tRNA(Arg) + AMP + diphosphate. This is Arginine--tRNA ligase from Halorhodospira halophila (strain DSM 244 / SL1) (Ectothiorhodospira halophila (strain DSM 244 / SL1)).